Here is a 698-residue protein sequence, read N- to C-terminus: tRNA (guanine(37)-N(1))-methyltransferase (698 aa).

The segment at 207–242 (SPPSVSLTENQDGDPQAQDSLRAVAAPPSPSSRKRG) is disordered. S-adenosyl-L-methionine contacts are provided by residues histidine 427, 465–466 (DL), 494–495 (DG), and asparagine 536.

Belongs to the class I-like SAM-binding methyltransferase superfamily. TRM5/TYW2 family. As to quaternary structure, monomer.

The protein localises to the mitochondrion matrix. It localises to the nucleus. Its subcellular location is the cytoplasm. It carries out the reaction guanosine(37) in tRNA + S-adenosyl-L-methionine = N(1)-methylguanosine(37) in tRNA + S-adenosyl-L-homocysteine + H(+). Functionally, specifically methylates the N1 position of guanosine-37 in various cytoplasmic and mitochondrial tRNAs. Methylation is not dependent on the nature of the nucleoside 5' of the target nucleoside. This is the first step in the biosynthesis of wybutosine (yW), a modified base adjacent to the anticodon of tRNAs and required for accurate decoding. This is tRNA (guanine(37)-N(1))-methyltransferase from Leishmania braziliensis.